Reading from the N-terminus, the 406-residue chain is MNKPVAPNSYKTGPDEEGMFGIFGGRFVAETLMPLILELQQAYETAKNDPEFKAELNALSTFYAGRPSKLYYAEGLSKHLGGAKIYFKREDLNHTGSHKINNCLGQILLAKRMGKTRIIAETGAGQHGVASATVAARFGLPCIVYVGASDVERQKPNVFRMKLLGAEVKPVSAGNGTLKDAMNEALRDWVTNVEDTYYLIGTAAGPHPYPELVRDFQSVIGTEARQQILEQEGRLPDVIVAAVGGGSNAIGLFHPFLDDASVKIVGVEAGGRGLEGEEHCASMSAGRPGVLHGNRTYLLQNADGQILEGHSVSAGLDYPGVGPEHSWLKDSGRVDYVPILDNEALDAFQLCTRTEGIIPALESAHAIAQAVKMAPTMGKDKVMIVNLSGRGDKDVHTVGKLLGMDI.

Lys99 carries the N6-(pyridoxal phosphate)lysine modification.

Belongs to the TrpB family. Tetramer of two alpha and two beta chains. The cofactor is pyridoxal 5'-phosphate.

The catalysed reaction is (1S,2R)-1-C-(indol-3-yl)glycerol 3-phosphate + L-serine = D-glyceraldehyde 3-phosphate + L-tryptophan + H2O. It participates in amino-acid biosynthesis; L-tryptophan biosynthesis; L-tryptophan from chorismate: step 5/5. Functionally, the beta subunit is responsible for the synthesis of L-tryptophan from indole and L-serine. This chain is Tryptophan synthase beta chain, found in Brucella melitensis biotype 2 (strain ATCC 23457).